A 151-amino-acid chain; its full sequence is Protein InSETG-4 (151 aa).

Its subcellular location is the cytoplasm. The protein resides in the cytosol. This chain is Protein InSETG-4 (InSet4-G), found in Homo sapiens (Human).